Here is a 375-residue protein sequence, read N- to C-terminus: E3 ubiquitin-protein ligase RHF2A (375 aa).

Residues 33–74 (CSICLESFCESDPSTLTSCKHEYHLQCILEWCQRSSQCPMCW) form an RING-type; atypical zinc finger. A compositionally biased stretch (basic residues) spans 146-159 (RARHGVRREGHRSR). Disordered regions lie at residues 146–165 (RARH…SQGH), 172–262 (SSQP…SESL), and 318–375 (ERLE…SGSS). Residues 178 to 188 (SSPPPHPPMPS) show a composition bias toward pro residues. Composition is skewed to polar residues over residues 211-245 (SHQS…SSPS) and 327-336 (RPSTASVSDV). Positions 337–365 (SENHTPETNNEHNRAAAGDEHSVNERGVK) are enriched in basic and acidic residues.

The catalysed reaction is S-ubiquitinyl-[E2 ubiquitin-conjugating enzyme]-L-cysteine + [acceptor protein]-L-lysine = [E2 ubiquitin-conjugating enzyme]-L-cysteine + N(6)-ubiquitinyl-[acceptor protein]-L-lysine.. The protein operates within protein modification; protein ubiquitination. In terms of biological role, E3 ubiquitin-protein ligase involved in the positive regulation of the gametogenesis progression. Required for the degradation of KRP6, a cyclin-dependent kinase inhibitor which accumulates during meiosis and blocks the progression of subsequent mitoses during gametophytes development. Functions in association with RHF1A. The polypeptide is E3 ubiquitin-protein ligase RHF2A (Arabidopsis thaliana (Mouse-ear cress)).